Here is a 547-residue protein sequence, read N- to C-terminus: Serine beta-lactamase-like protein LACTB, mitochondrial (547 aa).

Residues 1–115 (MYRLMSAVTA…RAIESSRDLL (115 aa)) constitute a mitochondrion transit peptide. Over residues 62 to 83 (GAAPAQSPAAPDPEASPLAEPP) the composition is skewed to low complexity. Residues 62 to 96 (GAAPAQSPAAPDPEASPLAEPPQEQSLAPWSPQTP) are disordered. Ser164 (acyl-ester intermediate) is an active-site residue. 2 positions are modified to N6-succinyllysine: Lys283 and Lys284. N6-acetyllysine occurs at positions 297 and 342.

This sequence belongs to the peptidase S12 family. As to expression, expressed predominantly in skeletal muscle.

It localises to the mitochondrion. Mitochondrial serine protease that acts as a regulator of mitochondrial lipid metabolism. Acts by decreasing protein levels of PISD, a mitochondrial enzyme that converts phosphatidylserine (PtdSer) to phosphatidylethanolamine (PtdEtn), thereby affecting mitochondrial lipid metabolism. It is unclear whether it acts directly by mediating proteolysis of PISD or by mediating proteolysis of another lipid metabolism protein. Acts as a tumor suppressor that has the ability to inhibit proliferation of multiple types of breast cancer cells: probably by promoting decreased levels of PISD, thereby affecting mitochondrial lipid metabolism. This is Serine beta-lactamase-like protein LACTB, mitochondrial from Homo sapiens (Human).